A 548-amino-acid chain; its full sequence is CTL-like protein DDB_G0288717 (548 aa).

The segment at 1–44 (MWAPEEDYKQPLLTNSRVANNGNNNNSNGRGGSSSPSTRLQPEH) is disordered. N-linked (GlcNAc...) asparagine glycosylation occurs at asparagine 25. Residues 52–72 (ILFTILFLLVIGGMAAISGIA) form a helical membrane-spanning segment. An N-linked (GlcNAc...) asparagine glycan is attached at asparagine 97. The next 4 membrane-spanning stretches (helical) occupy residues 125 to 145 (DILI…IQLL), 151 to 171 (FFIY…GGLF), 184 to 204 (MIVG…IVYL), and 226 to 246 (PSVF…IAYW). N-linked (GlcNAc...) asparagine glycosylation occurs at asparagine 273. A run of 2 helical transmembrane segments spans residues 290–310 (NLMY…SAVF) and 350–370 (FGSL…AFML). N-linked (GlcNAc...) asparagine glycosylation is present at asparagine 377. The next 3 membrane-spanning stretches (helical) occupy residues 381–401 (KLVV…ESIV), 442–462 (FIGG…SALF), and 479–499 (IALS…IVGI). N-linked (GlcNAc...) asparagine glycosylation is present at asparagine 544.

This sequence belongs to the CTL (choline transporter-like) family.

Its subcellular location is the membrane. The protein is CTL-like protein DDB_G0288717 of Dictyostelium discoideum (Social amoeba).